We begin with the raw amino-acid sequence, 154 residues long: Small ribosomal subunit protein bS6 (154 aa).

Positions 107-154 (KSDDRERGFRGPKPPGRFESGRKRGYDDREEFRARAGGDDDDRGLDQE) are disordered. A compositionally biased stretch (basic and acidic residues) spans 125–154 (ESGRKRGYDDREEFRARAGGDDDDRGLDQE).

It belongs to the bacterial ribosomal protein bS6 family.

Its function is as follows. Binds together with bS18 to 16S ribosomal RNA. The sequence is that of Small ribosomal subunit protein bS6 from Granulibacter bethesdensis (strain ATCC BAA-1260 / CGDNIH1).